The chain runs to 1664 residues: MYND-type zinc finger-containing chromatin reader Zmynd8 (1664 aa).

Low complexity-rich tracts occupy residues 1–16 (MESTDSSDSSGDSLKS), 30–40 (SPQPQLQSSSL), and 61–84 (SAPPGSANCSSNSSSSSPSNINVG). 3 disordered regions span residues 1–84 (MEST…INVG), 251–271 (SLSNSWSNDDKGPRRSNLRSE), and 295–323 (LALNTSGEGESSLFSDASDTKTTTAKTPE). Over residues 258–271 (NDDKGPRRSNLRSE) the composition is skewed to basic and acidic residues. The span at 296 to 308 (ALNTSGEGESSLF) shows a compositional bias: polar residues. Residues 309–320 (SDASDTKTTTAK) show a composition bias toward low complexity. The segment at 343-389 (DPFCWKCRGCGKLMPCSKCLRSFHSYCVRPATTKFDSSWKCPECQVI) adopts a PHD-type zinc-finger fold. Zn(2+)-binding residues include cysteine 346, cysteine 349, cysteine 358, cysteine 361, histidine 366, cysteine 369, cysteine 383, and cysteine 386. The Bromo domain occupies 401–504 (VSVDLLSQLL…KVCRQEANEI (104 aa)). Residues cysteine 507, cysteine 510, and cysteine 525 each coordinate Zn(2+). The region spanning 528–579 (PHLLLWAKLKGFPYWPAKAMGSSNSTLVNVRFFGKHDRAFVPVKDCFLYSAQ) is the PWWP domain. 4 disordered regions span residues 672 to 693 (KTKATESGNESDQSPSPTKKLS), 747 to 815 (ESVE…QNEN), 857 to 905 (KIPR…RQQE), and 919 to 1139 (TEVM…TNTS). Polar residues predominate over residues 676-690 (TESGNESDQSPSPTK). Basic residues predominate over residues 775–784 (HKRKSKHARK). Residues 785-800 (QHDNQDNQIEEAEKTG) show a composition bias toward basic and acidic residues. Over residues 874–884 (IPLPTAPPPKQ) the composition is skewed to pro residues. Positions 935–952 (PANQPQTDQVPLQQETIT) are enriched in polar residues. The segment covering 953–962 (AQPESQMPAA) has biased composition (low complexity). Pro residues predominate over residues 1006–1019 (PPMPLPMPPPPPLP). Positions 1037–1053 (TTIQRVSQKQGGKSTDT) are enriched in polar residues. Over residues 1073–1097 (SPTHSPLLSTAPSPSASPKPTSTLA) the composition is skewed to low complexity. Positions 1399, 1402, 1410, 1411, 1417, 1421, 1429, and 1433 each coordinate Zn(2+). An MYND-type zinc finger spans residues 1399–1433 (CANCMREAQLYCCWNTSYCDYPCQQLHWPGHSATC). The tract at residues 1613–1648 (VPKATGRSGKNNSRMRQTYSNNINNSNPQGMRCNNN) is disordered. The span at 1620–1648 (SGKNNSRMRQTYSNNINNSNPQGMRCNNN) shows a compositional bias: polar residues.

Its subcellular location is the nucleus. The protein resides in the chromosome. Its function is as follows. Chromatin reader that recognizes specific histone signatures to regulate transcription. Plays a role in neuronal development. In Drosophila melanogaster (Fruit fly), this protein is MYND-type zinc finger-containing chromatin reader Zmynd8.